Here is a 78-residue protein sequence, read N- to C-terminus: Large ribosomal subunit protein bL28 (78 aa).

The interval 1-30 (MAAHCQVTGAGPGFGHSISHSHRRTKRRFD) is disordered.

Belongs to the bacterial ribosomal protein bL28 family.

This is Large ribosomal subunit protein bL28 from Micrococcus luteus (strain ATCC 4698 / DSM 20030 / JCM 1464 / CCM 169 / CCUG 5858 / IAM 1056 / NBRC 3333 / NCIMB 9278 / NCTC 2665 / VKM Ac-2230) (Micrococcus lysodeikticus).